A 110-amino-acid polypeptide reads, in one-letter code: MTTVHSIADPCDPEVSPTNNRHLTVSYASRYPDYTRIPALTMKGQWLEAAGFATGTEVDVRVMNGCIVLTAQQPQPEESELMQSLRQACKLSARKQKQVQAFISVMAGSK.

One can recognise a SpoVT-AbrB domain in the interval Ser29–Pro74.

The protein belongs to the SymE family.

The protein resides in the cytoplasm. Functionally, involved in the degradation and recycling of damaged RNA. It is itself a target for degradation by the ATP-dependent protease Lon. This Salmonella typhi protein is Endoribonuclease SymE.